The primary structure comprises 372 residues: 4-hydroxy-3-methylbut-2-en-1-yl diphosphate synthase (flavodoxin) (372 aa).

[4Fe-4S] cluster contacts are provided by cysteine 270, cysteine 273, cysteine 305, and glutamate 312.

The protein belongs to the IspG family. Requires [4Fe-4S] cluster as cofactor.

It carries out the reaction (2E)-4-hydroxy-3-methylbut-2-enyl diphosphate + oxidized [flavodoxin] + H2O + 2 H(+) = 2-C-methyl-D-erythritol 2,4-cyclic diphosphate + reduced [flavodoxin]. The protein operates within isoprenoid biosynthesis; isopentenyl diphosphate biosynthesis via DXP pathway; isopentenyl diphosphate from 1-deoxy-D-xylulose 5-phosphate: step 5/6. Functionally, converts 2C-methyl-D-erythritol 2,4-cyclodiphosphate (ME-2,4cPP) into 1-hydroxy-2-methyl-2-(E)-butenyl 4-diphosphate. The chain is 4-hydroxy-3-methylbut-2-en-1-yl diphosphate synthase (flavodoxin) from Cronobacter sakazakii (strain ATCC BAA-894) (Enterobacter sakazakii).